The chain runs to 121 residues: uncharacterized protein (121 aa).

2 disordered regions span residues 1–28 and 60–82; these read MGCA…QNGD and QENL…VPGL. 2 positions are modified to phosphoserine: Ser-95 and Ser-115.

As to expression, expressed in spleen, prostate, testis and uterus.

This is an uncharacterized protein from Homo sapiens (Human).